The chain runs to 679 residues: Methionine--tRNA ligase (679 aa).

The 'HIGH' region motif lies at 12–22 (PYANGPIHIGH). Positions 143, 146, 156, and 158 each coordinate Zn(2+). A 'KMSKS' region motif is present at residues 328–332 (KMSKS). K331 contributes to the ATP binding site. The tract at residues 537–564 (MMEESKDEAAQETGAAATNPFNDSDQPL) is disordered. The tRNA-binding domain occupies 577–679 (DFMKVDLRVA…EGALPGQRVH (103 aa)).

The protein belongs to the class-I aminoacyl-tRNA synthetase family. MetG type 1 subfamily. Homodimer. The cofactor is Zn(2+).

The protein resides in the cytoplasm. The catalysed reaction is tRNA(Met) + L-methionine + ATP = L-methionyl-tRNA(Met) + AMP + diphosphate. Is required not only for elongation of protein synthesis but also for the initiation of all mRNA translation through initiator tRNA(fMet) aminoacylation. This chain is Methionine--tRNA ligase, found in Rhodopirellula baltica (strain DSM 10527 / NCIMB 13988 / SH1).